Reading from the N-terminus, the 612-residue chain is 1,8-cineole synthase, chloroplastic (612 aa).

A chloroplast-targeting transit peptide spans 1–52 (MALVSGAPLASRSCLNKSLISSTHELKPLRRTILPTLRWKSATPSINMCLTT). Residues Asp-363, Asp-367, and Asp-515 each coordinate Mg(2+). The short motif at 363–367 (DDIYD) is the DDXXD motif element.

Belongs to the terpene synthase family. Tpsd subfamily. Mg(2+) serves as cofactor. The cofactor is Mn(2+).

It is found in the plastid. The protein localises to the chloroplast. It catalyses the reaction (2E)-geranyl diphosphate + H2O = 1,8-cineole + diphosphate. Its pathway is terpene metabolism; oleoresin biosynthesis. Terpene synthase (TPS) involved in the biosynthesis of monoterpene natural products included in conifer oleoresin secretions and volatile emissions; these compounds contribute to biotic and abiotic stress defense against herbivores and pathogens. Catalyzes the conversion of (2E)-geranyl diphosphate (GPP) to 1,8-cineole. The polypeptide is 1,8-cineole synthase, chloroplastic (Picea engelmannii x Picea glauca (Hybrid white spruce)).